A 228-amino-acid polypeptide reads, in one-letter code: Prolactin-2B1 (228 aa).

A signal peptide spans 1–31 (MLLYLPQIFSSRASSLLFLVPYLLFWENVAS). 2 disulfide bridges follow: Cys89–Cys194 and Cys203–Cys228. The N-linked (GlcNAc...) asparagine glycan is linked to Asn173.

This sequence belongs to the somatotropin/prolactin family. As to expression, expression restricted to the placenta in trophoblast cells within the labyrinth zone.

It is found in the secreted. This chain is Prolactin-2B1 (Prl2b1), found in Rattus norvegicus (Rat).